Here is a 2150-residue protein sequence, read N- to C-terminus: MSDEPPIVLPTEEDGPFSNCVSIAFVNDKSIPVELRIRKAIRGKVTFTQELVVAARRLYLDGELERPDLNYHVAADFYDPFMIPVPDHRNWEYNPLYPREWPRLIDRDLVQKIKMSNTYKKNQARRKRRRLLRIFHRKRGGEFLNYLWHSKENDVHYKRYMAAYQFPLPFEKCIRDVVREELKDPETSFSKPPSVVHHSKIRPATPDLLKLAKYLGKDRFCFIVTPFKFRSQFRLRYYKKSPFKRSNILEKWLKFKKVRDQGVFNIRDAAREVKKLLQRKNVYHMTDPQCEQEFWDVYRLQMQWLEEDNIEENITMLRENLSKVTDEEFNRSVYIMRPENRASIHDDVTFTTDAEINLKPIVLELFRNNMPLEDIRQVKECIDDMINLTVCQELIPQVATIETVRDYSGVEQHRLKYIRPENELEIMFQLATVLVKNENTHDQEITSPMFALLRTEQYLWSIPLRPFLRMYTDWRKTKLNFKKFRKFSPELVSKAPIDLFKVFLTTNMDKKGVATKDTDCFDYRTASEIKKLYHEEFIRVRPIIEHQRFHRCYTSVITEEPLPNPFYWVHRGQWEKVYECNWKQRVKPLAGRFSWKTKHPNICDLPRLEKDDKQEMEMLAKMREKIREYNKEKEKHPFYVSSSLPEFASTSDFVKFPISNTGIKYTAPRRNQPKVQRSLVTYTRFRLAELEDKDFSFPEEKMLEKNRLLEKLNFEERLQLDALMSKDVKYKPRMIPEKGFLQLQDEKLILKRLCEKEDEWSGKQKRRFPDLYEQATQEAERLGDPDASTSGTSNKELGLLPVWKHDDFRDLKKINVLGSKEYPISSPYLIKRLHYDIHLEIVRDKLKSWIYRTELWEKMKPVYERLKRDKEKREKEWHEMRAAQRAQKEKEEEDQRRMDMGIEHGQESLLKSITPEVEQQILLPISRENSFEEMLPAPQEAYDEDLDQDIDIHFDGAESVCTGIRLDSEDRELVDSPDQVENEEPERVEAVTENIRQEMSDAEMRDLMRKKREQYSMLFPNVPQPFQPLNRFDVTAPGAGIVPPYDEAPDFDLSAYLEEDHVRIPTLSTVEINSLLKDQDLVEEQEIVEEEETPLVVEEPDIPAAPVLSAEEKASRISREMSALRKLPDAAFNYASDRDGVVVEEVETIEEIQEIYNDKLEKMIAARLGSIAQGANIERLSEDQLLGDQGSEDISFEEIQVDLLLESGVEVQVNQSVTISRSSTSFESLLVEDPEEHPEQLPVSASEKANNQIVPEVEVEGSVVPVTNQQEENVTSEGPTLQEGSSIPSSSHIYTVDELLGTESPGPEATETPVAEESPKKKSGKTTRGRPKKVKENLKKRIQPRRGQKEEAAHEPEVVEEQEQVEPEVGPEVVHEPVPAPAAQLETEPIEQQIEEPDKVFEPIIEALPLFETSPVPAPEGNIPSRAHSSDDDVQVISSETDPNGPINLVEQVQNDKLTAYQYSTEELLGEYGELDEAGAPSPSEIVVHDEVLQDEVLQPNPKSSKKRGRRRKKTPPHIAKARKVFTSISKTEEIELAPTPTQQSRKRMANVSSEEATATRRQKRAKVEEPNDSDVSRVLTPEPEDLHETERPGHVGEEGFETPSLRTGRESTASSVKTSRSKRLFLSKNNPVPRMRIQSQAGTNASPTPARRTGVARDSVSPDGASEKLKQLPKSVQDIFEVFDVERSAERGESATVTNLEGPVKIEIEDENWMAPPAITETSRKSKKRLRAEKQQQILDDIKLELNGEPPQKRECEILMERVQVKIEEGVENADCRIVQANFNCKSVEEHETLPLKIIRVFEENEKPVHKFFMTQIIWKEINEAFMTDPEKFMLLVRILFSDRNISGQIYKISMTVTDRIKGFDDDFIKLLTQFPKKLSQEHKPLVDYNKLAHALREKASLHLNNHKITPFTFHGVISNITEMKEKIIGRCEIGMLTDGDRDVLNSTENMLLGAYMKSVLRMTAQSQVSWAHPEYIKRRLEMIYYGWRMFLGSGGFFRVALAINRKDVKPMSQQFRDFFIEYLKDVNENYAKAVELVQMDEDKLMEAMIEKAGLSSIDLLALDEDVQGQVSESHKHKCVQCSIRNQSVYFSSYSLLELHGKLHQNLHELAPEDADDCQDCYETLTSSFEVIVHRINHHHSRRCFFADD.

Positions 443 to 987 (QEITSPMFAL…DQVENEEPER (545 aa)) are dosage compensation domain 1. 4 disordered regions span residues 874–894 (EKEWHEMRAAQRAQKEKEEED), 1261–1373 (GSVV…GPEV), 1411–1448 (FETSPVPAPEGNIPSRAHSSDDDVQVISSETDPNGPIN), and 1491–1670 (EVLQ…SEKL). The span at 1267–1293 (TNQQEENVTSEGPTLQEGSSIPSSSHI) shows a compositional bias: polar residues. A compositionally biased stretch (basic residues) spans 1321 to 1333 (KKSGKTTRGRPKK). Residues 1347-1357 (GQKEEAAHEPE) are compositionally biased toward basic and acidic residues. Over residues 1504 to 1524 (SSKKRGRRRKKTPPHIAKARK) the composition is skewed to basic residues. Residues 1508 to 1516 (RGRRRKKTP) are sex determination domain. Over residues 1585-1598 (EDLHETERPGHVGE) the composition is skewed to basic and acidic residues. Residues 1638-1648 (IQSQAGTNASP) are compositionally biased toward polar residues. 2 consecutive C2H2-type zinc fingers follow at residues 2078 to 2105 (HKCVQCSIRNQSVYFSSYSLLELHGKLH) and 2117 to 2141 (DDCQDCYETLTSSFEVIVHRINHHH). The dosage compensation domain 2 stretch occupies residues 2080-2105 (CVQCSIRNQSVYFSSYSLLELHGKLH).

Component of the SDC complex, which consists of sdc-1, sdc-2 and sdc-3. Within the complex, interacts with sdc-1 and sdc-2. Interacts with dpy-21. Post-translationally, sumoylated. Sumoylation is important for assembly of the dosage compensation complex and its robust binding to the X chromosome. Expressed in somatic and in germline tissues in hermaphrodites (XX). In males (XO), only present in embryos younger than the 100-cell stage (at protein level).

The protein localises to the chromosome. The protein resides in the nucleus. In terms of biological role, component of the SDC complex that functions in sex determination and in X chromosome dosage compensation specifically in hermaphrodite (XX) animals. Plays a central role in the recruitment of the condensin I-like dosage compensation complex to the male sex-determining autosomal gene her-1, thereby contributing to its repression and initiating hermaphrodite sexual development. Involved in the recruitment and assembly of the dosage compensation complex and the dosage compensation protein dpy-21 onto the X chromosomes in hermaphrodites, which leads to a reduction of X-linked gene transcription and an equalization of X-linked gene expression between the sexes. This Caenorhabditis elegans protein is Zinc finger protein sdc-3 (sdc-3).